Consider the following 566-residue polypeptide: MNPTAPQGGQLWSRCGGCASLLYRKRLRRNLDVCPECGAHSRLDASARLAQLVDPGSFTALPDRAPEVDPIGFVDVLPYPHRLTAARSGTGLVEAVVCGTATVAGHRCAIAVMDFRFLGGSLGCAVGELITRAAERALADRVPLVVVTASGGARMQEGVLSLMQMATVSQAIAALRESGVPSISVLTDPTYGGVAASFATNTDVVLAESGARMGFAGPRVIRQVTGRELPDGFQTAEFLLRHGQVDLVVPRHALRGRLAMLLAAAAGGRPPVGGGSRSEYSPGDRPSAAACRGEGQDAWETVRLARHPGRPTTLDYLETGFDGFVELHGDRLGADCPAVVGGLADLAGRPVMVVGHQKGHTTAELMARNFGMASPAGHRKALRLVRLAARWGLPVVTLVDTPGADPGVDAEEQGQAAAIAENILTLTTLPTPVVAVITGEGGSGGALALAVADRVLMLEHAVYSVISPEGCAAILWPDRSAAPQAARALRLTSADLCRLGVVDAVVPEPAPAAHHDPPAAVQAVREAVLAHLVPLLDVPTATLVRCRRRRFRRFGASRLGVRAGAR.

The interval 1–243 (MNPTAPQGGQ…QTAEFLLRHG (243 aa)) is acetyl-coenzyme A carboxylase carboxyl transferase subunit beta. In terms of domain architecture, CoA carboxyltransferase N-terminal spans 11 to 280 (LWSRCGGCAS…PVGGGSRSEY (270 aa)). The segment at 11-534 (LWSRCGGCAS…REAVLAHLVP (524 aa)) is carboxyltransferase. Zn(2+) is bound by residues cysteine 15, cysteine 18, cysteine 34, and cysteine 37. Residues 15–37 (CGGCASLLYRKRLRRNLDVCPEC) form a C4-type zinc finger. The segment at 244-566 (QVDLVVPRHA…SRLGVRAGAR (323 aa)) is acetyl-coenzyme A carboxylase carboxyl transferase subunit alpha. The disordered stretch occupies residues 268 to 292 (GRPPVGGGSRSEYSPGDRPSAAACR). In terms of domain architecture, CoA carboxyltransferase C-terminal spans 282 to 534 (PGDRPSAAAC…REAVLAHLVP (253 aa)).

This sequence in the N-terminal section; belongs to the AccD/PCCB family. It in the C-terminal section; belongs to the AccA family. As to quaternary structure, acetyl-CoA carboxylase is a heterotetramer composed of biotin carboxyl carrier protein (AccB), biotin carboxylase (AccC) and two subunits of ACCase subunit beta/alpha. Requires Zn(2+) as cofactor.

It localises to the cytoplasm. The catalysed reaction is N(6)-carboxybiotinyl-L-lysyl-[protein] + acetyl-CoA = N(6)-biotinyl-L-lysyl-[protein] + malonyl-CoA. Its pathway is lipid metabolism; malonyl-CoA biosynthesis; malonyl-CoA from acetyl-CoA: step 1/1. In terms of biological role, component of the acetyl coenzyme A carboxylase (ACC) complex. Biotin carboxylase (BC) catalyzes the carboxylation of biotin on its carrier protein (BCCP) and then the CO(2) group is transferred by the transcarboxylase to acetyl-CoA to form malonyl-CoA. The protein is Acetyl-coenzyme A carboxylase carboxyl transferase subunits beta/alpha (accD) of Salinispora arenicola (strain CNS-205).